The sequence spans 414 residues: Testis-specific Y-encoded-like protein 4 (414 aa).

Disordered stretches follow at residues 1–129 (MSGL…AGQK) and 391–414 (PRRGIRGPPRQPVESARSFRFQSG). Residues 24–40 (ASGDPDRDQCQGLREET) show a composition bias toward basic and acidic residues. The span at 101-112 (EAASAAEAADSS) shows a compositional bias: low complexity.

It belongs to the nucleosome assembly protein (NAP) family.

The chain is Testis-specific Y-encoded-like protein 4 (TSPYL4) from Homo sapiens (Human).